Reading from the N-terminus, the 920-residue chain is Rho guanine nucleotide exchange factor 1 (920 aa).

The region spanning 39–230 (DQNSQFQSLE…SLYMRHLGVR (192 aa)) is the RGSL domain. A disordered region spans residues 231–404 (TKSGDKKSGR…PGWRELVPPD (174 aa)). A compositionally biased stretch (basic and acidic residues) spans 281-311 (DCRHLKVEADAEKPGPADRKGGLGMSSRDRT). Acidic residues predominate over residues 364-380 (STEDNGETESPEPGDDG). Residues S373, G386, E390, S408, and S412 each carry the phosphoserine modification. The region spanning 415-604 (KRQEVISELL…REILHHVNQA (190 aa)) is the DH domain. Residues R432 and T694 each carry the phosphothreonine modification. Residues 646–759 (KLVHEGPLTW…WCNLITETAG (114 aa)) form the PH domain. Y737 carries the phosphotyrosine; by JAK2 modification. Disordered stretches follow at residues 764–797 (PAPA…AEMA) and 840–864 (TEED…PGPV). The stretch at 865-894 (HTQEIEENLLSLEVAIRQLEELEEEFCRLR) forms a coiled coil. The residue at position 905 (S905) is a Phosphoserine.

In terms of assembly, interacts with RHOA, GNA12 and GNA13. Homooligomerizes through the coiled coil region. Interacts with CTNNAL1. May interact with CCPG1. Post-translationally, phosphorylated by PKCA. Angiotensin-2 induced Tyr-737 phosphorylation is mediated by JAK2. Isoform 5 is phosphorylated at 'Ser-390'. In terms of tissue distribution, ubiquitously expressed.

It localises to the cytoplasm. The protein resides in the membrane. Functionally, seems to play a role in the regulation of RhoA GTPase by guanine nucleotide-binding alpha-12 (GNA12) and alpha-13 (GNA13) subunits. Acts as a GTPase-activating protein (GAP) for GNA12 and GNA13, and as guanine nucleotide exchange factor (GEF) for RhoA GTPase. Activated G alpha 13/GNA13 stimulates the RhoGEF activity through interaction with the RGS-like domain. This GEF activity is inhibited by binding to activated GNA12. Mediates angiotensin-2-induced RhoA activation. Isoform 3 and isoform 4 do not homooligomerize and show an enhanced RhoGEF activity. In lymphoid follicles, may trigger activation of GNA13 as part of S1PR2-dependent signaling pathway that leads to inhibition of germinal center (GC) B cell growth and migration outside the GC niche. The polypeptide is Rho guanine nucleotide exchange factor 1 (Arhgef1) (Mus musculus (Mouse)).